Consider the following 370-residue polypeptide: Lysophosphatidic acid receptor 4 (370 aa).

Topologically, residues 1-43 are extracellular; sequence MGDRRFIDFQFQDLNSSLRPRLGNATANNTCIVDDSFKYNLNG. Residues Asn-15, Asn-24, and Asn-28 are each glycosylated (N-linked (GlcNAc...) asparagine). The chain crosses the membrane as a helical span at residues 44–64; that stretch reads AVYSVVFILGLITNSASLFVF. Residues 65-73 lie on the Cytoplasmic side of the membrane; the sequence is CFRMKMRSE. A helical membrane pass occupies residues 74–94; it reads TAIFITNLALSDLLFVCTLPF. Residues 95-112 are Extracellular-facing; sequence KIFYNFNRHWPFGDTLCK. A disulfide bridge connects residues Cys-111 and Cys-188. Residues 113–133 traverse the membrane as a helical segment; it reads ISGTAFLTNIYGSMLFLTCIS. At 134 to 155 the chain is on the cytoplasmic side; that stretch reads VDRFLAIVYPFRSRTIRTRRNS. The chain crosses the membrane as a helical span at residues 156–176; the sequence is AIVCAGVWILVLSGGISASLF. Residues 177-203 are Extracellular-facing; that stretch reads STTNVNNATTTCFEGFSKRVWKTYLSK. Asn-183 is a glycosylation site (N-linked (GlcNAc...) asparagine). Residues 204–224 traverse the membrane as a helical segment; it reads ITIFIEVVGFIIPLILNVSCS. Over 225–254 the chain is Cytoplasmic; that stretch reads SVVLRTLRKPATLSQIGTNKKKVLKMITVH. The helical transmembrane segment at 255-275 threads the bilayer; sequence MAVFVVCFVPYNSVLFLYALV. Topologically, residues 276 to 294 are extracellular; the sequence is RSQAITNCLLERFAKIMYP. The chain crosses the membrane as a helical span at residues 295-315; sequence ITLCLATLNCCFDPFIYYFTL. The Cytoplasmic segment spans residues 316–370; the sequence is ESFQKSFYINTHIRMESLFKTETPLTPKPSLPAIQEEVSDQTTNNGGELMLESTF.

It belongs to the G-protein coupled receptor 1 family.

The protein resides in the cell membrane. Its function is as follows. Receptor for lysophosphatidic acid (LPA), a mediator of diverse cellular activities. Transduces a signal by increasing the intracellular calcium ions and by stimulating adenylyl cyclase activity. The rank order of potency for agonists of this receptor is 1-oleoyl- &gt; 1-stearoyl- &gt; 1-palmitoyl- &gt; 1-myristoyl- &gt; 1-alkyl- &gt; 1-alkenyl-LPA. In Mus musculus (Mouse), this protein is Lysophosphatidic acid receptor 4 (Lpar4).